The sequence spans 120 residues: U13-lycotoxin-Ls1a (120 aa).

A signal peptide spans 1 to 16 (MKILFVLISILYAVYC). A propeptide spanning residues 17 to 54 (FSSEEDVDSAYLANELEPVEDINSEQYAALEPKEEQER) is cleaved from the precursor. Cystine bridges form between cysteine 56-cysteine 70, cysteine 63-cysteine 76, cysteine 69-cysteine 87, and cysteine 78-cysteine 85. An Agouti domain is found at 56–95 (CADMGQDCKDDCDCCLNIATCNCWFGRYFCSCTFGDYQTC).

This sequence belongs to the neurotoxin 05 (agouti) family. In terms of processing, contains 6 disulfide bonds. Expressed by the venom gland.

It localises to the secreted. In Lycosa singoriensis (Wolf spider), this protein is U13-lycotoxin-Ls1a.